The sequence spans 416 residues: Gamma-glutamyl phosphate reductase (416 aa).

The protein belongs to the gamma-glutamyl phosphate reductase family.

Its subcellular location is the cytoplasm. The enzyme catalyses L-glutamate 5-semialdehyde + phosphate + NADP(+) = L-glutamyl 5-phosphate + NADPH + H(+). It participates in amino-acid biosynthesis; L-proline biosynthesis; L-glutamate 5-semialdehyde from L-glutamate: step 2/2. Catalyzes the NADPH-dependent reduction of L-glutamate 5-phosphate into L-glutamate 5-semialdehyde and phosphate. The product spontaneously undergoes cyclization to form 1-pyrroline-5-carboxylate. The polypeptide is Gamma-glutamyl phosphate reductase (Streptococcus equi subsp. zooepidemicus (strain MGCS10565)).